We begin with the raw amino-acid sequence, 332 residues long: 2,3-diketo-L-gulonate reductase (332 aa).

Histidine 44 acts as the Proton donor in catalysis. NAD(+) is bound by residues 168-174 (ITMVDMS), 224-225 (WK), and 304-306 (GHE).

It belongs to the LDH2/MDH2 oxidoreductase family. DlgD subfamily. Homodimer.

Its subcellular location is the cytoplasm. The enzyme catalyses 3-dehydro-L-gulonate + NAD(+) = 2,3-dioxo-L-gulonate + NADH + H(+). It carries out the reaction 3-dehydro-L-gulonate + NADP(+) = 2,3-dioxo-L-gulonate + NADPH + H(+). In terms of biological role, catalyzes the reduction of 2,3-diketo-L-gulonate in the presence of NADH, to form 3-keto-L-gulonate. The sequence is that of 2,3-diketo-L-gulonate reductase from Pasteurella multocida (strain Pm70).